The sequence spans 423 residues: Exodeoxyribonuclease 7 large subunit (423 aa).

This sequence belongs to the XseA family. Heterooligomer composed of large and small subunits.

Its subcellular location is the cytoplasm. It carries out the reaction Exonucleolytic cleavage in either 5'- to 3'- or 3'- to 5'-direction to yield nucleoside 5'-phosphates.. Its function is as follows. Bidirectionally degrades single-stranded DNA into large acid-insoluble oligonucleotides, which are then degraded further into small acid-soluble oligonucleotides. This is Exodeoxyribonuclease 7 large subunit from Natranaerobius thermophilus (strain ATCC BAA-1301 / DSM 18059 / JW/NM-WN-LF).